Consider the following 1044-residue polypeptide: Isoleucine--tRNA ligase (1044 aa).

The 'HIGH' region signature appears at 48–58 (PFATGLPHFGH). Residues 594–598 (KMSKS) carry the 'KMSKS' region motif. Lys-597 contacts ATP.

It belongs to the class-I aminoacyl-tRNA synthetase family. IleS type 2 subfamily. In terms of assembly, monomer. Requires Zn(2+) as cofactor.

The protein localises to the cytoplasm. It carries out the reaction tRNA(Ile) + L-isoleucine + ATP = L-isoleucyl-tRNA(Ile) + AMP + diphosphate. Functionally, catalyzes the attachment of isoleucine to tRNA(Ile). As IleRS can inadvertently accommodate and process structurally similar amino acids such as valine, to avoid such errors it has two additional distinct tRNA(Ile)-dependent editing activities. One activity is designated as 'pretransfer' editing and involves the hydrolysis of activated Val-AMP. The other activity is designated 'posttransfer' editing and involves deacylation of mischarged Val-tRNA(Ile). This is Isoleucine--tRNA ligase from Borrelia duttonii (strain Ly).